A 68-amino-acid chain; its full sequence is Galectin-10 (68 aa).

The 68-residue stretch at 1-68 (EPYLQVDFHT…LSISVLPDKY (68 aa)) folds into the Galectin domain.

As to quaternary structure, interacts with CEL.

Its subcellular location is the cytoplasm. It localises to the cytosol. It is found in the cytoplasmic granule. Regulates immune responses through the recognition of cell-surface glycans. Essential for the anergy and suppressive function of CD25-positive regulatory T-cells (Treg). This chain is Galectin-10 (CLC), found in Pongo pygmaeus (Bornean orangutan).